The chain runs to 341 residues: Holliday junction branch migration complex subunit RuvB (341 aa).

The interval 4–185 (TDRLIVPTAV…FGIVARLEFY (182 aa)) is large ATPase domain (RuvB-L). ATP is bound by residues L24, R25, G66, K69, T70, T71, 132–134 (EDF), R175, Y185, and R222. Residue T70 coordinates Mg(2+). The tract at residues 186-256 (SAEELGYIVH…VADAALVMLD (71 aa)) is small ATPAse domain (RuvB-S). The interval 259 to 341 (RAGLDVMDRK…ATPASDAELF (83 aa)) is head domain (RuvB-H). DNA is bound by residues R295, R314, and R319.

This sequence belongs to the RuvB family. As to quaternary structure, homohexamer. Forms an RuvA(8)-RuvB(12)-Holliday junction (HJ) complex. HJ DNA is sandwiched between 2 RuvA tetramers; dsDNA enters through RuvA and exits via RuvB. An RuvB hexamer assembles on each DNA strand where it exits the tetramer. Each RuvB hexamer is contacted by two RuvA subunits (via domain III) on 2 adjacent RuvB subunits; this complex drives branch migration. In the full resolvosome a probable DNA-RuvA(4)-RuvB(12)-RuvC(2) complex forms which resolves the HJ.

The protein localises to the cytoplasm. It carries out the reaction ATP + H2O = ADP + phosphate + H(+). The RuvA-RuvB-RuvC complex processes Holliday junction (HJ) DNA during genetic recombination and DNA repair, while the RuvA-RuvB complex plays an important role in the rescue of blocked DNA replication forks via replication fork reversal (RFR). RuvA specifically binds to HJ cruciform DNA, conferring on it an open structure. The RuvB hexamer acts as an ATP-dependent pump, pulling dsDNA into and through the RuvAB complex. RuvB forms 2 homohexamers on either side of HJ DNA bound by 1 or 2 RuvA tetramers; 4 subunits per hexamer contact DNA at a time. Coordinated motions by a converter formed by DNA-disengaged RuvB subunits stimulates ATP hydrolysis and nucleotide exchange. Immobilization of the converter enables RuvB to convert the ATP-contained energy into a lever motion, pulling 2 nucleotides of DNA out of the RuvA tetramer per ATP hydrolyzed, thus driving DNA branch migration. The RuvB motors rotate together with the DNA substrate, which together with the progressing nucleotide cycle form the mechanistic basis for DNA recombination by continuous HJ branch migration. Branch migration allows RuvC to scan DNA until it finds its consensus sequence, where it cleaves and resolves cruciform DNA. The polypeptide is Holliday junction branch migration complex subunit RuvB (Thiobacillus denitrificans (strain ATCC 25259 / T1)).